The sequence spans 235 residues: Maximins-S type A (235 aa).

The first 18 residues, 1–18 (MNFNYFILVLFFITSGHA), serve as a signal peptide directing secretion. 2 consecutive propeptides follow at residues 19–35 (KSET…HIKR) and 52–65 (SAEE…LVKR). Asn83 is subject to Asparagine amide. Residues 87–100 (SAEEQDLAEDLVTR) constitute a propeptide that is removed on maturation. Asn118 carries the asparagine amide modification. Positions 122 to 135 (SAEEQDLAEDLVKR) are excised as a propeptide. Asn153 carries the asparagine amide modification. A propeptide spanning residues 157–170 (SAEEQDLAEDLVTR) is cleaved from the precursor. Lys188 carries the post-translational modification Lysine amide. A propeptide spanning residues 192–205 (SAEDQDLAEDLVTR) is cleaved from the precursor. Lysine amide is present on Lys223. Positions 227 to 235 (SAEQEKDMK) are excised as a propeptide.

It belongs to the maximin-S family. As to expression, expressed by the skin dorsal glands.

Its subcellular location is the secreted. Functionally, maximin-S1 has no antimicrobial activity. Has no hemolytic activity. Maximin-S2 has an activity against mycoplasma but has no activity against common Gram-positive and Gram-negative bacteria nor fungi. Has no hemolytic activity. In terms of biological role, maximin-S3 has an activity against mycoplasma but has no activity against common Gram-positive and Gram-negative bacteria nor fungi. Has no hemolytic activity. Its function is as follows. Maximin-S4 has an activity against mycoplasma but has no activity against common Gram-positive and Gram-negative bacteria nor fungi. Has no hemolytic activity. Functionally, maximin-S5 has an activity against mycoplasma but has no activity against common Gram-positive and Gram-negative bacteria nor fungi. Has no hemolytic activity. This is Maximins-S type A from Bombina maxima (Giant fire-bellied toad).